Reading from the N-terminus, the 678-residue chain is Glycine--tRNA ligase beta subunit (678 aa).

Belongs to the class-II aminoacyl-tRNA synthetase family. Tetramer of two alpha and two beta subunits.

The protein resides in the cytoplasm. It catalyses the reaction tRNA(Gly) + glycine + ATP = glycyl-tRNA(Gly) + AMP + diphosphate. In Streptococcus pneumoniae serotype 19F (strain G54), this protein is Glycine--tRNA ligase beta subunit.